Here is a 420-residue protein sequence, read N- to C-terminus: Glutamyl-tRNA reductase (420 aa).

Substrate-binding positions include 49 to 52 (TCNR), S110, 115 to 117 (EHQ), and Q121. The active-site Nucleophile is the C50. 190-195 (GSGTIN) provides a ligand contact to NADP(+).

Belongs to the glutamyl-tRNA reductase family. In terms of assembly, homodimer.

It catalyses the reaction (S)-4-amino-5-oxopentanoate + tRNA(Glu) + NADP(+) = L-glutamyl-tRNA(Glu) + NADPH + H(+). The protein operates within porphyrin-containing compound metabolism; protoporphyrin-IX biosynthesis; 5-aminolevulinate from L-glutamyl-tRNA(Glu): step 1/2. Its function is as follows. Catalyzes the NADPH-dependent reduction of glutamyl-tRNA(Glu) to glutamate 1-semialdehyde (GSA). This chain is Glutamyl-tRNA reductase, found in Wigglesworthia glossinidia brevipalpis.